Consider the following 283-residue polypeptide: Trafficking protein particle complex subunit 31 (283 aa).

Residues 1–16 (MSQRIIQPSASDQQFP) show a composition bias toward polar residues. Disordered regions lie at residues 1–20 (MSQR…GKSD) and 126–156 (SSKL…RLQE). A compositionally biased stretch (low complexity) spans 126 to 151 (SSKLSNASNSPGMLANSSTATSASAN).

Belongs to the TRAPP small subunits family. BET3 subfamily. Part of the multisubunit TRAPP (transport protein particle) I complex composed of BET3, BET5, TRS20, TRS23, TRS31 and TRS33. Part of the multisubunit TRAPP (transport protein particle) II complex composed of BET3, BET5, TRS20, TRS23, TRS31, TRS33, TRS65, TRS85, TRS120 and TRS130. Part of the multisubunit TRAPP (transport protein particle) III complex composed of BET3, BET5, TRS20, TRS23, TRS31, TRS33 and TRS85.

Its subcellular location is the golgi apparatus. The protein localises to the cis-Golgi network. It localises to the endoplasmic reticulum. It is found in the preautophagosomal structure. Functionally, component of the TRAPP I, TRAPP II and TRAPP III complexes which act as guanine nucleotide exchange factors (GEF) for YPT1. TRAPP I plays a key role in the late stages of endoplasmic reticulum to Golgi traffic. TRAPP II plays a role in intra-Golgi transport. TRAPP III plays a role in autophagosome formation. This is Trafficking protein particle complex subunit 31 (TRS31) from Saccharomyces cerevisiae (strain ATCC 204508 / S288c) (Baker's yeast).